A 198-amino-acid chain; its full sequence is Nucleoside triphosphate pyrophosphatase (198 aa).

Catalysis depends on Asp70, which acts as the Proton acceptor.

Belongs to the Maf family. Requires a divalent metal cation as cofactor.

The protein resides in the cytoplasm. The enzyme catalyses a ribonucleoside 5'-triphosphate + H2O = a ribonucleoside 5'-phosphate + diphosphate + H(+). It carries out the reaction a 2'-deoxyribonucleoside 5'-triphosphate + H2O = a 2'-deoxyribonucleoside 5'-phosphate + diphosphate + H(+). In terms of biological role, nucleoside triphosphate pyrophosphatase. May have a dual role in cell division arrest and in preventing the incorporation of modified nucleotides into cellular nucleic acids. The protein is Nucleoside triphosphate pyrophosphatase of Thermosynechococcus vestitus (strain NIES-2133 / IAM M-273 / BP-1).